A 930-amino-acid polypeptide reads, in one-letter code: Serine/threonine-protein kinase ATG1 (930 aa).

The 304-residue stretch at 23 to 326 (FIIDREIGKG…FENFFAHHVV (304 aa)) folds into the Protein kinase domain. ATP is bound by residues 29–37 (IGKGSFAQV) and Lys-52. Catalysis depends on Asp-166, which acts as the Proton acceptor. 4 disordered regions span residues 336-468 (DDIP…TEEE), 504-563 (GQNN…SASP), 853-874 (ISSG…DTEE), and 904-930 (NQAK…YGST). Residues 337 to 350 (DIPKPPKRELETIR) are compositionally biased toward basic and acidic residues. Low complexity predominate over residues 377–393 (SPKSPRSSPRSSTVNSS). 2 stretches are compositionally biased toward polar residues: residues 400–417 (RQSQ…HNSG) and 504–531 (GQNN…TTGA). Residues 629 to 897 (AAQAIEEFAT…RLNMVRKKQQ (269 aa)) form an ATG13-binding region.

This sequence belongs to the protein kinase superfamily. Ser/Thr protein kinase family. APG1/unc-51/ULK1 subfamily. Homodimer. Dimerization requires the presence of ATG13. Forms a ternary complex with ATG13 and ATG17.

It is found in the cytoplasm. Its subcellular location is the preautophagosomal structure membrane. It catalyses the reaction L-seryl-[protein] + ATP = O-phospho-L-seryl-[protein] + ADP + H(+). The enzyme catalyses L-threonyl-[protein] + ATP = O-phospho-L-threonyl-[protein] + ADP + H(+). Functionally, serine/threonine protein kinase involved in the cytoplasm to vacuole transport (Cvt) and found to be essential in autophagy, where it is required for the formation of autophagosomes. Involved in the clearance of protein aggregates which cannot be efficiently cleared by the proteasome. Required for selective autophagic degradation of the nucleus (nucleophagy) as well as for mitophagy which contributes to regulate mitochondrial quantity and quality by eliminating the mitochondria to a basal level to fulfill cellular energy requirements and preventing excess ROS production. Also involved in endoplasmic reticulum-specific autophagic process, in selective removal of ER-associated degradation (ERAD) substrates. Plays a key role in ATG9 and ATG23 cycling through the pre-autophagosomal structure and is necessary to promote ATG18 binding to ATG9 through phosphorylation of ATG9. Catalyzes phosphorylation of ATG4, decreasing the interaction between ATG4 and ATG8 and impairing deconjugation of PE-conjugated forms of ATG8. Contributes to conidiation by regulating the conidial levels of the conidiation-related protein CP15 and mediates fungal oxidation resistance by controlling total superoxide dismutase (SOD) activity. The sequence is that of Serine/threonine-protein kinase ATG1 from Beauveria bassiana (strain ARSEF 2860) (White muscardine disease fungus).